Reading from the N-terminus, the 105-residue chain is Multidrug resistance protein EbrA (105 aa).

A run of 4 helical transmembrane segments spans residues 2 to 22 (LIGYIFLTIAICSESIGAAML), 35 to 55 (ALVVIGYSLAFYMLSLTLNHI), 57 to 77 (LSLSYATWSGAGTVLTTVIGV), and 84 to 104 (LNAKGLIGILLLLSGVVLLNW).

Belongs to the drug/metabolite transporter (DMT) superfamily. Small multidrug resistance (SMR) (TC 2.A.7.1) family. EbrA/EbrB subfamily. In terms of assembly, the efflux pump is composed of EbrA and EbrB.

Its subcellular location is the cell membrane. In terms of biological role, part of a multidrug efflux pump. Confers resistance to cationic lipophilic dyes such as ethidium bromide, acriflavine, pyronine Y and safranin O. The efflux is probably coupled to an influx of protons. This Bacillus subtilis (strain 168) protein is Multidrug resistance protein EbrA (ebrA).